The sequence spans 546 residues: uncharacterized protein (546 aa).

Transmembrane regions (helical) follow at residues 27 to 46, 59 to 78, 83 to 100, 114 to 134, 143 to 163, 176 to 196, 204 to 224, 237 to 257, and 268 to 288; these read EALVLLSILFFVPGIFPFVF, NGLIQCYPVAAFFAVLALVT, FALIWWMYTVFNALYAIL, SVLFGLIYLAGGGFWFFAYAA, PLIILLTAVHFHYSAFLIPIF, MLYSWITWVILLSPLLIALGI, VIAVSIYMAAIYLHAFLVFTA, LSSAVLMITIAFSMIYSFGVF, and MIWIHGFVNAFGVILPALIGW.

The protein resides in the cell membrane. This is an uncharacterized protein from Bacillus subtilis (strain 168).